The sequence spans 284 residues: D-tagatose-1,6-bisphosphate aldolase subunit GatY (284 aa).

Aspartate 82 serves as the catalytic Proton donor. Zn(2+) contacts are provided by histidine 83 and histidine 180. Glycine 181 lines the dihydroxyacetone phosphate pocket. A Zn(2+)-binding site is contributed by histidine 208. Dihydroxyacetone phosphate-binding positions include 209–211 (GAS) and 230–233 (NVAT).

This sequence belongs to the class II fructose-bisphosphate aldolase family. TagBP aldolase GatY subfamily. Forms a complex with GatZ. Zn(2+) serves as cofactor.

It catalyses the reaction D-tagatofuranose 1,6-bisphosphate = D-glyceraldehyde 3-phosphate + dihydroxyacetone phosphate. It functions in the pathway carbohydrate metabolism; D-tagatose 6-phosphate degradation; D-glyceraldehyde 3-phosphate and glycerone phosphate from D-tagatose 6-phosphate: step 2/2. Catalytic subunit of the tagatose-1,6-bisphosphate aldolase GatYZ, which catalyzes the reversible aldol condensation of dihydroxyacetone phosphate (DHAP or glycerone-phosphate) with glyceraldehyde 3-phosphate (G3P) to produce tagatose 1,6-bisphosphate (TBP). Requires GatZ subunit for full activity and stability. Is involved in the catabolism of galactitol. This Shigella sonnei (strain Ss046) protein is D-tagatose-1,6-bisphosphate aldolase subunit GatY.